Here is a 438-residue protein sequence, read N- to C-terminus: Probable D-serine dehydratase (438 aa).

At Lys114 the chain carries N6-(pyridoxal phosphate)lysine.

It belongs to the serine/threonine dehydratase family. DsdA subfamily. Requires pyridoxal 5'-phosphate as cofactor.

It carries out the reaction D-serine = pyruvate + NH4(+). The polypeptide is Probable D-serine dehydratase (Histophilus somni (strain 2336) (Haemophilus somnus)).